A 183-amino-acid chain; its full sequence is Large ribosomal subunit protein bL17 (183 aa).

The span at 130-150 (GTKFAKDEKAKAEATEAKAEE) shows a compositional bias: basic and acidic residues. The disordered stretch occupies residues 130 to 183 (GTKFAKDEKAKAEATEAKAEETTETTESTEAESTEAPAEEAKAEDTAAEKKDES). Acidic residues predominate over residues 151 to 162 (TTETTESTEAES). Basic and acidic residues predominate over residues 168 to 183 (EEAKAEDTAAEKKDES).

This sequence belongs to the bacterial ribosomal protein bL17 family. In terms of assembly, part of the 50S ribosomal subunit. Contacts protein L32.

The sequence is that of Large ribosomal subunit protein bL17 from Saccharopolyspora erythraea (strain ATCC 11635 / DSM 40517 / JCM 4748 / NBRC 13426 / NCIMB 8594 / NRRL 2338).